We begin with the raw amino-acid sequence, 346 residues long: GTPase Obg (346 aa).

The Obg domain maps to 1–159 (MRFVDEVTFV…RELRLELQLL (159 aa)). Residues 128-148 (LHFKSSTNRAPRQSTEGTAGE) form a disordered region. Polar residues predominate over residues 130–144 (FKSSTNRAPRQSTEG). Positions 160 to 335 (ADVGLLGMPN…LCGDIMNDLE (176 aa)) constitute an OBG-type G domain. GTP contacts are provided by residues 166–173 (GMPNVGKS), 191–195 (FTTLY), 213–216 (DIPG), 285–288 (NRLD), and 316–318 (SGL). Mg(2+) contacts are provided by Ser173 and Thr193.

It belongs to the TRAFAC class OBG-HflX-like GTPase superfamily. OBG GTPase family. As to quaternary structure, monomer. It depends on Mg(2+) as a cofactor.

It is found in the cytoplasm. Its function is as follows. An essential GTPase which binds GTP, GDP and possibly (p)ppGpp with moderate affinity, with high nucleotide exchange rates and a fairly low GTP hydrolysis rate. Plays a role in control of the cell cycle, stress response, ribosome biogenesis and in those bacteria that undergo differentiation, in morphogenesis control. This chain is GTPase Obg, found in Halorhodospira halophila (strain DSM 244 / SL1) (Ectothiorhodospira halophila (strain DSM 244 / SL1)).